A 492-amino-acid chain; its full sequence is GTPase Der (492 aa).

EngA-type G domains are found at residues 3 to 166 and 205 to 378; these read PVVA…MDDV and IKLA…DSST. GTP-binding positions include 9-16, 56-60, 118-121, 211-218, 258-262, and 323-326; these read GRPNVGKS, DTGGI, NKTD, DTAGV, and NKWD. The 85-residue stretch at 379-463 folds into the KH-like domain; that stretch reads RRVSTALLTR…PIRIQFKEGA (85 aa).

It belongs to the TRAFAC class TrmE-Era-EngA-EngB-Septin-like GTPase superfamily. EngA (Der) GTPase family. Associates with the 50S ribosomal subunit.

In terms of biological role, GTPase that plays an essential role in the late steps of ribosome biogenesis. The sequence is that of GTPase Der from Cronobacter sakazakii (strain ATCC BAA-894) (Enterobacter sakazakii).